The chain runs to 129 residues: Glycine cleavage system H protein (129 aa).

Residues valine 24 to lysine 106 enclose the Lipoyl-binding domain. Residue lysine 65 is modified to N6-lipoyllysine.

The protein belongs to the GcvH family. As to quaternary structure, the glycine cleavage system is composed of four proteins: P, T, L and H. It depends on (R)-lipoate as a cofactor.

Functionally, the glycine cleavage system catalyzes the degradation of glycine. The H protein shuttles the methylamine group of glycine from the P protein to the T protein. This is Glycine cleavage system H protein from Alteromonas mediterranea (strain DSM 17117 / CIP 110805 / LMG 28347 / Deep ecotype).